The chain runs to 365 residues: GTPase Obg (365 aa).

One can recognise an Obg domain in the interval 1-159 (MKFIDEARIE…RMLKLELKVL (159 aa)). An OBG-type G domain is found at 160-334 (ADVGLLGMPN…LIYAIKDHLQ (175 aa)). GTP contacts are provided by residues 166–173 (GMPNAGKS), 191–195 (FTTLH), 213–216 (DIPG), 284–287 (NKLD), and 315–317 (SAL). Mg(2+)-binding residues include Ser-173 and Thr-193.

The protein belongs to the TRAFAC class OBG-HflX-like GTPase superfamily. OBG GTPase family. In terms of assembly, monomer. It depends on Mg(2+) as a cofactor.

Its subcellular location is the cytoplasm. Functionally, an essential GTPase which binds GTP, GDP and possibly (p)ppGpp with moderate affinity, with high nucleotide exchange rates and a fairly low GTP hydrolysis rate. Plays a role in control of the cell cycle, stress response, ribosome biogenesis and in those bacteria that undergo differentiation, in morphogenesis control. The sequence is that of GTPase Obg from Cupriavidus necator (strain ATCC 17699 / DSM 428 / KCTC 22496 / NCIMB 10442 / H16 / Stanier 337) (Ralstonia eutropha).